The following is a 199-amino-acid chain: Dephospho-CoA kinase (199 aa).

The 189-residue stretch at 11–199 (RIGLTGGIAS…DLHDQLDALL (189 aa)) folds into the DPCK domain. 19–24 (ASGKSS) contributes to the ATP binding site.

Belongs to the CoaE family.

It localises to the cytoplasm. It catalyses the reaction 3'-dephospho-CoA + ATP = ADP + CoA + H(+). It functions in the pathway cofactor biosynthesis; coenzyme A biosynthesis; CoA from (R)-pantothenate: step 5/5. Catalyzes the phosphorylation of the 3'-hydroxyl group of dephosphocoenzyme A to form coenzyme A. This Synechococcus sp. (strain CC9902) protein is Dephospho-CoA kinase.